Consider the following 563-residue polypeptide: Kelch repeat and BTB domain-containing protein 1 (563 aa).

Positions 21–88 (CDINIVINDE…IYGIPLSLTN (68 aa)) constitute a BTB domain. The BACK domain maps to 123 to 219 (CIDFYIYADK…SLLSPQVIKS (97 aa)). Kelch repeat units lie at residues 252–297 (IELI…VMDN), 298–346 (IIYM…VDDE), 347–395 (YIYC…MLNG), 397–441 (IYVI…VHAG), 442–492 (KIYI…SVHN), and 494–540 (LYVG…PIKH).

As to quaternary structure, interacts (via BTB domain) with host CUL3.

Its subcellular location is the host cytoplasm. Its function is as follows. Probable substrate-specific adapter of CUL3-containing E3 ubiquitin-protein ligases which mediate the ubiquitination and subsequent proteasomal degradation of host target proteins. This Mus musculus (Mouse) protein is Kelch repeat and BTB domain-containing protein 1 (KBTB1).